The sequence spans 267 residues: Tryptophan synthase alpha chain (267 aa).

Catalysis depends on proton acceptor residues Glu47 and Asp58.

Belongs to the TrpA family. In terms of assembly, tetramer of two alpha and two beta chains.

It carries out the reaction (1S,2R)-1-C-(indol-3-yl)glycerol 3-phosphate + L-serine = D-glyceraldehyde 3-phosphate + L-tryptophan + H2O. It participates in amino-acid biosynthesis; L-tryptophan biosynthesis; L-tryptophan from chorismate: step 5/5. Functionally, the alpha subunit is responsible for the aldol cleavage of indoleglycerol phosphate to indole and glyceraldehyde 3-phosphate. In Chlorobium limicola (strain DSM 245 / NBRC 103803 / 6330), this protein is Tryptophan synthase alpha chain.